The following is a 398-amino-acid chain: Fructose-bisphosphate aldolase 2, chloroplastic (398 aa).

Residues 1–46 (MASTSLLKASPVLDKSEWVKGQSVLFRQPSSASVVLRNRATSLTVR) constitute a chloroplast transit peptide. R95 is a substrate binding site. S157 is modified (phosphoserine). Residue K185 coordinates substrate. S215 is subject to Phosphoserine. Catalysis depends on E225, which acts as the Proton acceptor. The active-site Schiff-base intermediate with dihydroxyacetone-P is K267. 309 to 311 (SGG) contacts substrate. Position 394 is an N6,N6,N6-trimethyllysine (K394).

It belongs to the class I fructose-bisphosphate aldolase family. As to quaternary structure, homotetramer. In terms of processing, can be trimethylated at Lys-394 by LSMT-L. The methylation level has no influence on the ologomerization state or on the kinetic properties of the enzyme. Phosphorylated on tyrosine residues in response to abscisic acid (ABA) in germinating seeds. Highly expressed in rosettes leaves.

It localises to the plastid. The protein resides in the chloroplast. Its subcellular location is the plastoglobule. It is found in the chloroplast stroma. The enzyme catalyses beta-D-fructose 1,6-bisphosphate = D-glyceraldehyde 3-phosphate + dihydroxyacetone phosphate. It functions in the pathway carbohydrate degradation; glycolysis; D-glyceraldehyde 3-phosphate and glycerone phosphate from D-glucose: step 4/4. Functionally, plays a key role in glycolysis and gluconeogenesis. This Arabidopsis thaliana (Mouse-ear cress) protein is Fructose-bisphosphate aldolase 2, chloroplastic.